The following is a 498-amino-acid chain: Glycerol kinase (498 aa).

An ADP-binding site is contributed by T14. 3 residues coordinate ATP: T14, T15, and S16. Position 14 (T14) interacts with sn-glycerol 3-phosphate. R18 contacts ADP. 3 residues coordinate sn-glycerol 3-phosphate: R84, E85, and Y136. The glycerol site is built by R84, E85, and Y136. H232 carries the phosphohistidine; by HPr modification. D246 is a sn-glycerol 3-phosphate binding site. The glycerol site is built by D246 and Q247. ADP is bound by residues T268 and G311. ATP-binding residues include T268, G311, Q315, and G412. Residues G412 and N416 each contribute to the ADP site.

It belongs to the FGGY kinase family. As to quaternary structure, homotetramer and homodimer (in equilibrium). In terms of processing, the phosphoenolpyruvate-dependent sugar phosphotransferase system (PTS), including enzyme I, and histidine-containing protein (HPr) are required for the phosphorylation, which leads to the activation of the enzyme.

It catalyses the reaction glycerol + ATP = sn-glycerol 3-phosphate + ADP + H(+). Its pathway is polyol metabolism; glycerol degradation via glycerol kinase pathway; sn-glycerol 3-phosphate from glycerol: step 1/1. Activated by phosphorylation and inhibited by fructose 1,6-bisphosphate (FBP). Its function is as follows. Key enzyme in the regulation of glycerol uptake and metabolism. Catalyzes the phosphorylation of glycerol to yield sn-glycerol 3-phosphate. This chain is Glycerol kinase, found in Lactococcus lactis subsp. lactis (strain IL1403) (Streptococcus lactis).